A 359-amino-acid chain; its full sequence is E3 ubiquitin-protein ligase RNF146 (359 aa).

The RING-type zinc-finger motif lies at 36–74 (CAICLQTCVHPVSLPCKHVFCYLCVKGASWLGKRCALCR). Residues Lys-84 and Lys-94 each participate in a glycyl lysine isopeptide (Lys-Gly) (interchain with G-Cter in ubiquitin) cross-link. Positions 91 to 167 (EELKAASRGN…EHGRRRKIKR (77 aa)) constitute a WWE domain. The a glycoprotein site is built by Tyr-107, Arg-110, and Trp-114. Lys-130 is covalently cross-linked (Glycyl lysine isopeptide (Lys-Gly) (interchain with G-Cter in ubiquitin)). Positions 144, 153, 163, and 175 each coordinate a glycoprotein. Lys-175 participates in a covalent cross-link: Glycyl lysine isopeptide (Lys-Gly) (interchain with G-Cter in ubiquitin). The disordered stretch occupies residues 259 to 359 (ERSHRGEGEE…PDGQCTVTEV (101 aa)). Residues 284-298 (SVEETESDASSDSED) show a composition bias toward acidic residues. Phosphoserine occurs at positions 290 and 294. Residues 306–322 (HSLTQQRLLVPNANQTV) show a composition bias toward polar residues.

Can form homooligomers. Interacts with PARsylated AXIN1, AXIN2, BLZF1, CASC3, H1-2, IPO7, LIG3, NCL, PARP1, XRCC1, XRCC5 and XRCC6. Interacts with DDB1, DHX15, IQGAP1, LRPPRC, PARP2, PRKDC, RUVBL2, TNKS1 and TNKS2. Binding often leads to interactor ubiquitination, in the presence of the appropriate E1 and E2 enzymes, and proteasomal degradation. Post-translationally, ubiquitinated; autoubiquitinated. Autoubiquitination is enhanced upon poly(ADP-ribose)-binding.

The protein localises to the cytoplasm. The protein resides in the cytosol. It localises to the nucleus. It catalyses the reaction S-ubiquitinyl-[E2 ubiquitin-conjugating enzyme]-L-cysteine + [acceptor protein]-L-lysine = [E2 ubiquitin-conjugating enzyme]-L-cysteine + N(6)-ubiquitinyl-[acceptor protein]-L-lysine.. It participates in protein modification; protein ubiquitination. Functionally, E3 ubiquitin-protein ligase that specifically binds poly-ADP-ribosylated (PARsylated) proteins and mediates their ubiquitination and subsequent degradation. May regulate many important biological processes, such as cell survival and DNA damage response. Acts as an activator of the Wnt signaling pathway by mediating the ubiquitination of PARsylated AXIN1 and AXIN2, 2 key components of the beta-catenin destruction complex. Acts in cooperation with tankyrase proteins (TNKS and TNKS2), which mediate PARsylation of target proteins AXIN1, AXIN2, BLZF1, CASC3, TNKS and TNKS2. Recognizes and binds tankyrase-dependent PARsylated proteins via its WWE domain and mediates their ubiquitination, leading to their degradation. Different ubiquitin linkage types have been observed: TNKS2 undergoes ubiquitination at 'Lys-48' and 'Lys-63', while AXIN1 is only ubiquitinated at 'Lys-48'. May regulate TNKS and TNKS2 subcellular location, preventing aggregation at a centrosomal location. Neuroprotective protein. Protects the brain against N-methyl-D-aspartate (NMDA) receptor-mediated glutamate excitotoxicity and ischemia, by interfering with PAR-induced cell death, called parthanatos. Prevents nuclear translocation of AIFM1 in a PAR-binding dependent manner. Does not affect PARP1 activation. Protects against cell death induced by DNA damaging agents, such as N-methyl-N-nitro-N-nitrosoguanidine (MNNG) and rescues cells from G1 arrest. Promotes cell survival after gamma-irradiation. Facilitates DNA repair. In Ailuropoda melanoleuca (Giant panda), this protein is E3 ubiquitin-protein ligase RNF146 (RNF146).